The following is a 345-amino-acid chain: uncharacterized protein (345 aa).

This sequence belongs to the transketolase family. Requires thiamine diphosphate as cofactor.

This is an uncharacterized protein from Sinorhizobium fredii (strain NBRC 101917 / NGR234).